Reading from the N-terminus, the 163-residue chain is HTH-type transcriptional regulator IscR (163 aa).

Positions 2–131 (RLTSKGRYAV…NNITLGELVN (130 aa)) constitute an HTH rrf2-type domain. Residues 28 to 51 (LADISERQGISLSYLEQLFSRLRK) constitute a DNA-binding region (H-T-H motif). The [2Fe-2S] cluster site is built by C92, C98, and C104. The span at 140–149 (DRQHTHDAPR) shows a compositional bias: basic and acidic residues. Residues 140-163 (DRQHTHDAPRSTRTQDAIDVKLRA) are disordered.

It depends on [2Fe-2S] cluster as a cofactor.

Regulates the transcription of several operons and genes involved in the biogenesis of Fe-S clusters and Fe-S-containing proteins. This chain is HTH-type transcriptional regulator IscR, found in Citrobacter koseri (strain ATCC BAA-895 / CDC 4225-83 / SGSC4696).